The following is a 470-amino-acid chain: Mucin-like protein 3 (470 aa).

A signal peptide spans 1 to 29; that stretch reads MAQMTSGLYPMFGFFICLLFLPASWEAGA. At 30-401 the chain is on the extracellular side; that stretch reads NTFQELQKTG…EGSNSFPAWA (372 aa). 2 disordered regions span residues 57 to 234 and 248 to 318; these read RALS…HTIP and TKEA…KAPE. Over residues 75–87 the composition is skewed to polar residues; the sequence is STATQKPKRQCNT. An N-linked (GlcNAc...) asparagine glycan is attached at Asn-122. Positions 132–152 are enriched in basic and acidic residues; that stretch reads ARNERSADDHGSTNSEKRSDG. The segment covering 169-193 has biased composition (polar residues); that stretch reads TRTSGTPVSSTETSTKLRTTSQKPE. The segment covering 194–203 has biased composition (basic and acidic residues); it reads TSSHDSDLIR. Positions 204 to 222 are enriched in polar residues; that stretch reads KSTSLPVKSTEVSRTSYRT. Basic and acidic residues predominate over residues 260–273; sequence KYERETRSASERIS. Over residues 283–295 the composition is skewed to polar residues; that stretch reads HTPSAGETTTQVS. Asn-325 carries N-linked (GlcNAc...) asparagine glycosylation. Residues 402–422 form a helical membrane-spanning segment; that stretch reads IVVVILMAVIILLIFLGLIFL. Topologically, residues 423-470 are cytoplasmic; that stretch reads VSCASRARHQLTQNSEDAEPEDKGGRNSYPVYLMEQQNLNLNQISSPP.

It localises to the cell membrane. The protein localises to the cytoplasm. Functionally, may modulate NF-kappaB signaling and play a role in cell growth. The polypeptide is Mucin-like protein 3 (Rattus norvegicus (Rat)).